The sequence spans 835 residues: Ribonucleoside-diphosphate reductase large subunit (835 aa).

Residues serine 222, 237-238 (SC), glycine 266, 447-451 (NLCCE), and 660-664 (PSASS) contribute to the substrate site. A disulfide bridge links cysteine 238 with cysteine 464. Asparagine 447 serves as the catalytic Proton acceptor. Catalysis depends on cysteine 449, which acts as the Cysteine radical intermediate. Catalysis depends on glutamate 451, which acts as the Proton acceptor.

The protein belongs to the ribonucleoside diphosphate reductase large chain family. In terms of assembly, heterotetramer composed of a homodimer of the large subunit (R1) and a homodimer of the small subunit (R2). Larger multisubunit protein complex are also active, composed of (R1)n(R2)n.

It carries out the reaction a 2'-deoxyribonucleoside 5'-diphosphate + [thioredoxin]-disulfide + H2O = a ribonucleoside 5'-diphosphate + [thioredoxin]-dithiol. Ribonucleoside-diphosphate reductase holoenzyme provides the precursors necessary for viral DNA synthesis. Allows virus growth in non-dividing cells. Catalyzes the biosynthesis of deoxyribonucleotides from the corresponding ribonucleotides. This chain is Ribonucleoside-diphosphate reductase large subunit, found in Magallana gigas (Pacific oyster).